The chain runs to 67 residues: Brevinin-1CDYc (67 aa).

The signal sequence occupies residues 1 to 22 (MFTLKKSLLLIFFLGTINLSLC). Residues 23–45 (EEERNADEEERRDDPEERDVEVE) constitute a propeptide that is removed on maturation. An intrachain disulfide couples Cys-61 to Cys-67.

This sequence belongs to the frog skin active peptide (FSAP) family. Brevinin subfamily. Expressed by the skin glands.

It is found in the secreted. Antimicrobial peptide. In Rana huanrensis (Huanren frog), this protein is Brevinin-1CDYc.